Reading from the N-terminus, the 356-residue chain is Mannonate dehydratase 2 (356 aa).

The protein belongs to the mannonate dehydratase family. Fe(2+) is required as a cofactor. Mn(2+) serves as cofactor.

It carries out the reaction D-mannonate = 2-dehydro-3-deoxy-D-gluconate + H2O. The protein operates within carbohydrate metabolism; pentose and glucuronate interconversion. In terms of biological role, catalyzes the dehydration of D-mannonate. This is Mannonate dehydratase 2 from Bacillus licheniformis (strain ATCC 14580 / DSM 13 / JCM 2505 / CCUG 7422 / NBRC 12200 / NCIMB 9375 / NCTC 10341 / NRRL NRS-1264 / Gibson 46).